The sequence spans 602 residues: DNA damage-binding protein CMR1 (602 aa).

Residues 35-85 form a disordered region; it reads KEVDNKSFSSPSSQKRRKTTKKPVIKKEISEPSRRSRRIAGIKSELEDPKQ. A compositionally biased stretch (basic residues) spans 48 to 58; that stretch reads QKRRKTTKKPV. Basic and acidic residues predominate over residues 59–68; the sequence is IKKEISEPSR. 6 WD repeats span residues 229-270, 291-328, 390-430, 446-484, 526-569, and 571-602; these read ICHN…NDTK, RNVS…STEL, LHDK…KSVY, NSRL…KLDN, GRWV…LAHL, and EQVG…YLFE.

This sequence belongs to the WD repeat DDB2/WDR76 family.

In terms of biological role, DNA-binding protein that binds to both single- and double-stranded DNA. Binds preferentially to UV-damaged DNA. May be involved in DNA-metabolic processes. This chain is DNA damage-binding protein CMR1, found in Candida albicans (strain SC5314 / ATCC MYA-2876) (Yeast).